A 233-amino-acid polypeptide reads, in one-letter code: Superoxide dismutase [Mn], mitochondrial (233 aa).

The transit peptide at 1-27 (MALRSLVTRKNLPSAFKAATGLGQLRG) directs the protein to the mitochondrion. Mn(2+) is bound by residues His55, His103, Asp192, and His196.

It belongs to the iron/manganese superoxide dismutase family. Homotetramer. It depends on Mn(2+) as a cofactor. As to expression, present in all tissues examined (leaf, petiole, root, latex, callus) with young leaves showing the highest levels in intact plants.

It is found in the mitochondrion matrix. It catalyses the reaction 2 superoxide + 2 H(+) = H2O2 + O2. In terms of biological role, destroys superoxide anion radicals which are normally produced within the cells and which are toxic to biological systems. This Hevea brasiliensis (Para rubber tree) protein is Superoxide dismutase [Mn], mitochondrial (SODA).